The following is a 114-amino-acid chain: Protein yippee-like (114 aa).

In terms of domain architecture, Yippee spans 14–111 (RTYSCVHCRA…IELAHMIKEN (98 aa)). Residues Cys18, Cys21, Cys74, and Cys77 each contribute to the Zn(2+) site.

It belongs to the yippee family.

Its function is as follows. Involved in regulating synaptic transmission in presynaptic neurons. In class IV dendritic arborization neurons (nociceptors), involved in regulating activation of their second-order neurons (SONs) and maintaining synaptic contact between nociceptors and their SONs. The chain is Protein yippee-like from Drosophila melanogaster (Fruit fly).